Reading from the N-terminus, the 934-residue chain is Bifunctional uridylyltransferase/uridylyl-removing enzyme (934 aa).

The tract at residues 1-379 is uridylyltransferase; sequence MSAHDLKLEE…TFSRRKRKLS (379 aa). The interval 380–736 is uridylyl-removing; it reads DDGAFISENH…AKPHAFEAVT (357 aa). The 118-residue stretch at 496–613 folds into the HD domain; that stretch reads VDEHLLRCIA…IDFADTVQTM (118 aa). ACT domains lie at 737–818 and 848–931; these read EITV…DMLA and VIEV…RSPQ.

The protein belongs to the GlnD family. It depends on Mg(2+) as a cofactor.

It carries out the reaction [protein-PII]-L-tyrosine + UTP = [protein-PII]-uridylyl-L-tyrosine + diphosphate. The enzyme catalyses [protein-PII]-uridylyl-L-tyrosine + H2O = [protein-PII]-L-tyrosine + UMP + H(+). Its activity is regulated as follows. Uridylyltransferase (UTase) activity is inhibited by glutamine, while glutamine activates uridylyl-removing (UR) activity. In terms of biological role, modifies, by uridylylation and deuridylylation, the PII regulatory proteins (GlnB and homologs), in response to the nitrogen status of the cell that GlnD senses through the glutamine level. Under low glutamine levels, catalyzes the conversion of the PII proteins and UTP to PII-UMP and PPi, while under higher glutamine levels, GlnD hydrolyzes PII-UMP to PII and UMP (deuridylylation). Thus, controls uridylylation state and activity of the PII proteins, and plays an important role in the regulation of nitrogen assimilation and metabolism. In Brucella abortus (strain S19), this protein is Bifunctional uridylyltransferase/uridylyl-removing enzyme.